Consider the following 267-residue polypeptide: MIRDITIGQYVPGNSLLHKADPRTKIILTFIMMIFIFLINTYWGYLLLTLFTAITVVSSNIPVKFVLKGLKPILFIVVFAGIINIFMIKGTVIWSWGFLSITYEGINVAIKMAIRLFLLIITASLLTYTTTPIALTDAIENLLAPLKRIKVPVHEIAMMMTIALRFIPTLLDETDKIIKAQSSRGADFDSGNMIERAKSFIPVLIPLFISAFRRADELATAMEARCYRGSEGRTRMKQLRFTRFDVLVTGITVVFMTWVILMEYVFF.

5 helical membrane-spanning segments follow: residues Ile-26–Leu-46, Ile-73–Ile-93, Leu-116–Thr-136, Val-151–Leu-171, and Leu-247–Phe-267.

The protein belongs to the energy-coupling factor EcfT family. Forms a stable energy-coupling factor (ECF) transporter complex composed of 2 membrane-embedded substrate-binding proteins (S component), 2 ATP-binding proteins (A component) and 2 transmembrane proteins (T component). May be able to interact with more than 1 S component at a time.

Its subcellular location is the cell membrane. Its function is as follows. Transmembrane (T) component of an energy-coupling factor (ECF) ABC-transporter complex. Unlike classic ABC transporters this ECF transporter provides the energy necessary to transport a number of different substrates. The sequence is that of Energy-coupling factor transporter transmembrane protein EcfT from Ruminiclostridium cellulolyticum (strain ATCC 35319 / DSM 5812 / JCM 6584 / H10) (Clostridium cellulolyticum).